A 359-amino-acid polypeptide reads, in one-letter code: tRNA/tmRNA (uracil-C(5))-methyltransferase (359 aa).

Residues Gln183, Tyr211, Asn216, Glu232, and Asp292 each contribute to the S-adenosyl-L-methionine site. The Nucleophile role is filled by Cys317. Glu351 serves as the catalytic Proton acceptor.

Belongs to the class I-like SAM-binding methyltransferase superfamily. RNA M5U methyltransferase family. TrmA subfamily.

It catalyses the reaction uridine(54) in tRNA + S-adenosyl-L-methionine = 5-methyluridine(54) in tRNA + S-adenosyl-L-homocysteine + H(+). The enzyme catalyses uridine(341) in tmRNA + S-adenosyl-L-methionine = 5-methyluridine(341) in tmRNA + S-adenosyl-L-homocysteine + H(+). Its function is as follows. Dual-specificity methyltransferase that catalyzes the formation of 5-methyluridine at position 54 (m5U54) in all tRNAs, and that of position 341 (m5U341) in tmRNA (transfer-mRNA). This chain is tRNA/tmRNA (uracil-C(5))-methyltransferase, found in Pseudomonas fluorescens (strain ATCC BAA-477 / NRRL B-23932 / Pf-5).